A 534-amino-acid polypeptide reads, in one-letter code: (R)-citramalate synthase (534 aa).

The Pyruvate carboxyltransferase domain occupies 11 to 274; it reads FHVFDTTLRD…KQVLPEGRLR (264 aa).

Belongs to the alpha-IPM synthase/homocitrate synthase family.

The enzyme catalyses pyruvate + acetyl-CoA + H2O = (3R)-citramalate + CoA + H(+). It participates in amino-acid biosynthesis; L-isoleucine biosynthesis; 2-oxobutanoate from pyruvate: step 1/3. Its function is as follows. Catalyzes the condensation of pyruvate and acetyl-coenzyme A to form (R)-citramalate. This Streptomyces coelicolor (strain ATCC BAA-471 / A3(2) / M145) protein is (R)-citramalate synthase.